Reading from the N-terminus, the 388-residue chain is Succinate--CoA ligase [ADP-forming] subunit beta (388 aa).

One can recognise an ATP-grasp domain in the interval 9 to 244 (KQIFAQYGLP…PSQEDAREAA (236 aa)). Residues Lys-46, 53 to 55 (GRG), Glu-99, Ala-102, and Glu-107 each bind ATP. Asn-199 and Asp-213 together coordinate Mg(2+). Residues Asn-264 and 321 to 323 (GIV) contribute to the substrate site.

This sequence belongs to the succinate/malate CoA ligase beta subunit family. Heterotetramer of two alpha and two beta subunits. Mg(2+) serves as cofactor.

The catalysed reaction is succinate + ATP + CoA = succinyl-CoA + ADP + phosphate. It carries out the reaction GTP + succinate + CoA = succinyl-CoA + GDP + phosphate. It participates in carbohydrate metabolism; tricarboxylic acid cycle; succinate from succinyl-CoA (ligase route): step 1/1. In terms of biological role, succinyl-CoA synthetase functions in the citric acid cycle (TCA), coupling the hydrolysis of succinyl-CoA to the synthesis of either ATP or GTP and thus represents the only step of substrate-level phosphorylation in the TCA. The beta subunit provides nucleotide specificity of the enzyme and binds the substrate succinate, while the binding sites for coenzyme A and phosphate are found in the alpha subunit. This is Succinate--CoA ligase [ADP-forming] subunit beta from Mannheimia succiniciproducens (strain KCTC 0769BP / MBEL55E).